The chain runs to 689 residues: Quinidine resistance protein 3 (689 aa).

The segment covering 1-24 (MQAQGSQSNVGSLRSNCSDNSLPN) has biased composition (polar residues). The interval 1 to 73 (MQAQGSQSNV…DNQLSRLKSE (73 aa)) is disordered. Residues 1–108 (MQAQGSQSNV…RDYPPMMKKM (108 aa)) lie on the Extracellular side of the membrane. Composition is skewed to basic and acidic residues over residues 29–51 (MHCD…EKTN) and 59–73 (SREH…LKSE). Residues 109–131 (IVFLIAFSSMMGPMGTSIIFPAI) traverse the membrane as a helical segment. Topologically, residues 132–139 (NSITTEFK) are cytoplasmic. Residues 140–163 (TSVIMVNVSIGVYLLSLGVFPLWW) form a helical membrane-spanning segment. At 164-175 (SSLSELEGRRTT) the chain is on the extracellular side. A helical transmembrane segment spans residues 176 to 193 (YITSFALLFAFNIGSALA). Residues 194-235 (PDINSFIALRMLCGAASASVQSVGAGTVADLYISEDRGKNLS) lie on the Cytoplasmic side of the membrane. Residues 236–256 (YYYLGPLLAPLLSPIFGSLLV) traverse the membrane as a helical segment. The Extracellular portion of the chain corresponds to 257–265 (NRWPWRSTQ). The helical transmembrane segment at 266–283 (WFMVILSGCNVILLTVLL) threads the bilayer. Topologically, residues 284 to 475 (PETLRKQDSK…KSLHFLEYPP (192 aa)) are cytoplasmic. Serine 436 is modified (phosphoserine). A helical transmembrane segment spans residues 476-493 (VALAITFSAISFSTVYFV). Topologically, residues 494 to 510 (NMTVEYKYSRPPYNFKP) are extracellular. Residues 511–532 (LYIGLLYIPNSVTYFFASIYGG) form a helical membrane-spanning segment. The Cytoplasmic segment spans residues 533-558 (RWVDMLLKRYKEKYGILAPEARISWN). The chain crosses the membrane as a helical span at residues 559-577 (VVTSVISFPIALLIFGWCL). Residues 578–586 (DKKCHWVTP) are Extracellular-facing. The chain crosses the membrane as a helical span at residues 587–609 (LIGTALFGYAAMMTIGATLSYLV). Residues 610–624 (DSLPGKGATGVALNN) lie on the Cytoplasmic side of the membrane. A helical membrane pass occupies residues 625 to 642 (LIRQILAATAVFVTTPML). Over 643 to 648 (NGMGTG) the chain is Extracellular. Residues 649–668 (WAFTMLAFIVLGASSVLIIL) traverse the membrane as a helical segment. The Cytoplasmic segment spans residues 669–689 (KKHGDYWRENYDLQKLYDKID).

Belongs to the major facilitator superfamily. CAR1 family.

It localises to the cell membrane. In terms of biological role, multidrug resistance transporter involved in resistance and adaptation to quinidine and to the herbicide barban (4-chloro-2-butynyl [3-chlorophenyl] carbamate). This is Quinidine resistance protein 3 (QDR3) from Saccharomyces cerevisiae (strain ATCC 204508 / S288c) (Baker's yeast).